Consider the following 245-residue polypeptide: 1-(5-phosphoribosyl)-5-[(5-phosphoribosylamino)methylideneamino] imidazole-4-carboxamide isomerase (245 aa).

Asp-7 serves as the catalytic Proton acceptor. The active-site Proton donor is Asp-129.

This sequence belongs to the HisA/HisF family.

Its subcellular location is the cytoplasm. The catalysed reaction is 1-(5-phospho-beta-D-ribosyl)-5-[(5-phospho-beta-D-ribosylamino)methylideneamino]imidazole-4-carboxamide = 5-[(5-phospho-1-deoxy-D-ribulos-1-ylimino)methylamino]-1-(5-phospho-beta-D-ribosyl)imidazole-4-carboxamide. The protein operates within amino-acid biosynthesis; L-histidine biosynthesis; L-histidine from 5-phospho-alpha-D-ribose 1-diphosphate: step 4/9. This is 1-(5-phosphoribosyl)-5-[(5-phosphoribosylamino)methylideneamino] imidazole-4-carboxamide isomerase from Shewanella pealeana (strain ATCC 700345 / ANG-SQ1).